A 364-amino-acid polypeptide reads, in one-letter code: D-alanine--D-alanine ligase (364 aa).

In terms of domain architecture, ATP-grasp spans 134–347; the sequence is RRLACINGLK…YPDLLDELIN (214 aa). 167 to 222 serves as a coordination point for ATP; that stretch reads ASEFGWPLFVKPCSLGSSVGIHKANNMDELNAAVADALRYDEEILVEEFIVGREIE. Residues D300, E314, and N316 each coordinate Mg(2+).

This sequence belongs to the D-alanine--D-alanine ligase family. Requires Mg(2+) as cofactor. The cofactor is Mn(2+).

Its subcellular location is the cytoplasm. The catalysed reaction is 2 D-alanine + ATP = D-alanyl-D-alanine + ADP + phosphate + H(+). It participates in cell wall biogenesis; peptidoglycan biosynthesis. Cell wall formation. This Legionella pneumophila (strain Lens) protein is D-alanine--D-alanine ligase.